A 144-amino-acid chain; its full sequence is Large ribosomal subunit protein uL15 (144 aa).

The interval 1–54 is disordered; the sequence is MRLNTLSPAEGSKKAGKRLGRGIGSGLGKTGGRGHKGQKSRSGGGVRRGFEGGQ. Positions 21 to 31 are enriched in gly residues; that stretch reads RGIGSGLGKTG.

The protein belongs to the universal ribosomal protein uL15 family. Part of the 50S ribosomal subunit.

Functionally, binds to the 23S rRNA. This Salmonella enteritidis PT4 (strain P125109) protein is Large ribosomal subunit protein uL15.